Reading from the N-terminus, the 274-residue chain is Glutamate racemase (274 aa).

Substrate is bound by residues 9–10 and 41–42; these read DS and YG. Cys73 (proton donor/acceptor) is an active-site residue. 74 to 75 contributes to the substrate binding site; the sequence is NT. Residue Cys183 is the Proton donor/acceptor of the active site. Substrate is bound at residue 184-185; the sequence is TH.

Belongs to the aspartate/glutamate racemases family.

The catalysed reaction is L-glutamate = D-glutamate. It participates in cell wall biogenesis; peptidoglycan biosynthesis. Its function is as follows. Provides the (R)-glutamate required for cell wall biosynthesis. This chain is Glutamate racemase, found in Shewanella baltica (strain OS223).